The following is a 552-amino-acid chain: DnaJ homolog subfamily C member 1 (552 aa).

Positions 1–43 (MWVPGFGSARLPQRRRSGLESSSVRPLWLLLLFLLAAVRPVRA) are cleaved as a signal peptide. Topologically, residues 44-149 (WESGDLELFD…RRVRKMSNAE (106 aa)) are lumenal. Residues 56 to 129 (EEVQLNFYEF…RYDDVLINGL (74 aa)) form the J domain. The helical transmembrane segment at 150-170 (LALLLFIILTVGHYAVVWSIY) threads the bilayer. Residues 171-552 (LEKQLDELLG…LVQKKKQAKS (382 aa)) lie on the Cytoplasmic side of the membrane. The 55-residue stretch at 323 to 377 (RQAPEWTEEDLSQLTRSMVKFPGGTPGRWDKIAHELGRSVTDVTTKAKELKDSVT) folds into the SANT 1 domain. The disordered stretch occupies residues 370–495 (KELKDSVTSS…ERTRAAEEAW (126 aa)). Serine 379 bears the Phosphoserine mark. Over residues 419 to 431 (MEDEEHEAAEGEQ) the composition is skewed to acidic residues. Residues 453-470 (TRVEPEEKLRGKRQKDFD) show a composition bias toward basic and acidic residues. Residues serine 477 and serine 478 each carry the phosphoserine modification. The segment covering 480-492 (EEKQRKERTRAAE) has biased composition (basic and acidic residues). The region spanning 490-545 (AAEEAWTQSQQKLLELALQQYPKGASDRWDKIAKCVPSKSKEDCIARYKLLVELVQ) is the SANT 2 domain.

As to quaternary structure, interacts (via J domain) with HSPA5. Interacts (via cytosolic domain) with ribosomes. Interacts (via SANT 2 domain) with SERPINA3; the interaction delays the formation of the covalent inhibitory complex SERPINA3-chymotrypsin, but does not alter the catalytic activity of SERPINA3. Interacts (via SANT 2 domain) with ITIH4 (via C-terminus); the interaction protects ITIH4 against in vitro cleavage by kallikrein. In terms of tissue distribution, widely expressed.

It localises to the endoplasmic reticulum membrane. The protein resides in the nucleus membrane. It is found in the microsome membrane. Functionally, may modulate protein synthesis. The chain is DnaJ homolog subfamily C member 1 (Dnajc1) from Mus musculus (Mouse).